The following is a 236-amino-acid chain: UPF0257 lipoprotein YnfC (236 aa).

An N-terminal signal peptide occupies residues 1–16; that stretch reads MKKPLLLTLLCMILAG. Cys-17 is lipidated: N-palmitoyl cysteine. Cys-17 carries S-diacylglycerol cysteine lipidation.

Belongs to the UPF0257 family.

The protein localises to the cell membrane. The chain is UPF0257 lipoprotein YnfC from Salmonella schwarzengrund (strain CVM19633).